A 427-amino-acid polypeptide reads, in one-letter code: MAIPRFSSLLRCRKWAKSDWLVASIGCVLIVFFLSFFFDPTSDSVPSVDRSRPIISPSDLVKLKLSSVAKERGAFCLDGSLPGYHFHEGSGSGSQSWLVHLEGGGWCNTVASCSARALTKLGSSNYFEQEVAFQGVLSSDPSQNPEFFNWNKVAIRYCDGASFSGRPEAEFKNGTRLFFRGQLIWEAIIDELLSMGMSDAKQAILTGCSAGGLASLIHCDYFRDHLPKDAAVKCVSDGGYFLNVPDVLGNPTMRSFYHDVVNLQGVEKSLDQKCVAKTEPSKCMFPQEFLKNIRTPVFLVNPAYDFWQIQHVLVPTSADPDKSWAKCRLNIKECDAEQIKVLHGFRSSMMTAIGEFHQNKDGGMFIDSCYAHCQTVMSVTWHSLTSPRIENKTIAESVGDWYFNRKPVKLIDCPYPCNPSCYNMNFT.

The N-terminal stretch at 1 to 35 is a signal peptide; sequence MAIPRFSSLLRCRKWAKSDWLVASIGCVLIVFFLS. N-linked (GlcNAc...) asparagine glycosylation is present at asparagine 173. Active-site charge relay system residues include serine 209, aspartate 305, and histidine 372. Residue asparagine 391 is glycosylated (N-linked (GlcNAc...) asparagine).

This sequence belongs to the pectinacetylesterase family.

The protein resides in the secreted. Its subcellular location is the cell wall. Hydrolyzes acetyl esters in homogalacturonan regions of pectin. In type I primary cell wall, galacturonic acid residues of pectin can be acetylated at the O-2 and O-3 positions. Decreasing the degree of acetylation of pectin gels in vitro alters their physical properties. This chain is Pectin acetylesterase 5, found in Arabidopsis thaliana (Mouse-ear cress).